The primary structure comprises 238 residues: uncharacterized protein (238 aa).

Helical transmembrane passes span 13 to 33 (TLFFIYFVFLTSFCLCFFGII), 40 to 60 (GSVGQLIAKLVVIVVLTLILG), 107 to 127 (VVLILSLVLTYYLSIYAFCQV), and 140 to 160 (VISLIILIFFLSLSFFVPMAF). 2 4Fe-4S ferredoxin-type domains span residues 178-208 (PFFQLKTNNNCVKCKLCEFKCPMQIKITEKL) and 204-233 (ITEKLDQKECIRCFECKSSCKKDALSFSYA). [4Fe-4S] cluster is bound by residues Cys188, Cys191, Cys194, Cys198, Cys213, Cys216, Cys219, and Cys223.

The protein localises to the cell membrane. This is an uncharacterized protein from Methanocaldococcus jannaschii (strain ATCC 43067 / DSM 2661 / JAL-1 / JCM 10045 / NBRC 100440) (Methanococcus jannaschii).